The following is a 164-amino-acid chain: Phosphopantetheine adenylyltransferase (164 aa).

A substrate-binding site is contributed by serine 11. ATP-binding positions include 11 to 12 (SF) and histidine 19. The substrate site is built by lysine 43, leucine 75, and arginine 89. ATP-binding positions include 90-92 (GLR), glutamate 100, and 125-131 (YGYLSSS).

The protein belongs to the bacterial CoaD family. In terms of assembly, homohexamer. The cofactor is Mg(2+).

Its subcellular location is the cytoplasm. The enzyme catalyses (R)-4'-phosphopantetheine + ATP + H(+) = 3'-dephospho-CoA + diphosphate. It functions in the pathway cofactor biosynthesis; coenzyme A biosynthesis; CoA from (R)-pantothenate: step 4/5. Functionally, reversibly transfers an adenylyl group from ATP to 4'-phosphopantetheine, yielding dephospho-CoA (dPCoA) and pyrophosphate. The chain is Phosphopantetheine adenylyltransferase from Geobacter sulfurreducens (strain ATCC 51573 / DSM 12127 / PCA).